The chain runs to 338 residues: Tetraacyldisaccharide 4'-kinase (338 aa).

51–58 contributes to the ATP binding site; that stretch reads HLGGAGKT.

Belongs to the LpxK family.

It catalyses the reaction a lipid A disaccharide + ATP = a lipid IVA + ADP + H(+). It participates in glycolipid biosynthesis; lipid IV(A) biosynthesis; lipid IV(A) from (3R)-3-hydroxytetradecanoyl-[acyl-carrier-protein] and UDP-N-acetyl-alpha-D-glucosamine: step 6/6. Its function is as follows. Transfers the gamma-phosphate of ATP to the 4'-position of a tetraacyldisaccharide 1-phosphate intermediate (termed DS-1-P) to form tetraacyldisaccharide 1,4'-bis-phosphate (lipid IVA). This chain is Tetraacyldisaccharide 4'-kinase, found in Rhodopseudomonas palustris (strain BisB5).